A 170-amino-acid polypeptide reads, in one-letter code: 3-dehydroquinate dehydratase (170 aa).

The Proton acceptor role is filled by Tyr-22. Residues Asn-76, His-82, and Asp-89 each contribute to the substrate site. His-102 acts as the Proton donor in catalysis. Substrate contacts are provided by residues Leu-103–Thr-104 and Arg-113.

Belongs to the type-II 3-dehydroquinase family. In terms of assembly, homododecamer.

It catalyses the reaction 3-dehydroquinate = 3-dehydroshikimate + H2O. Its pathway is metabolic intermediate biosynthesis; chorismate biosynthesis; chorismate from D-erythrose 4-phosphate and phosphoenolpyruvate: step 3/7. Functionally, catalyzes a trans-dehydration via an enolate intermediate. The polypeptide is 3-dehydroquinate dehydratase (aroQ) (Helicobacter pylori (strain J99 / ATCC 700824) (Campylobacter pylori J99)).